The following is a 236-amino-acid chain: Rab-like protein 3 (236 aa).

The tract at residues Met1–Asp236 is small GTPase-like. GTP is bound by residues Gly16–Ser21, Lys148–Asp150, and Asp179–Cys180.

Belongs to the small GTPase superfamily. Rab family. In terms of assembly, homodimer. Interacts with GPR89; the interaction stabilizes GPR89. Interacts with RAP1GDS1.

In terms of biological role, required for KRAS signaling regulation and modulation of cell proliferation. Regulator of KRAS prenylation, and probably prenylation of other small GTPases. Required for lymphocyte development and function. Not required for myeloid cell development. This Bos taurus (Bovine) protein is Rab-like protein 3 (RABL3).